The following is a 432-amino-acid chain: Gamma-glutamyl phosphate reductase (432 aa).

Belongs to the gamma-glutamyl phosphate reductase family.

It localises to the cytoplasm. The enzyme catalyses L-glutamate 5-semialdehyde + phosphate + NADP(+) = L-glutamyl 5-phosphate + NADPH + H(+). It participates in amino-acid biosynthesis; L-proline biosynthesis; L-glutamate 5-semialdehyde from L-glutamate: step 2/2. In terms of biological role, catalyzes the NADPH-dependent reduction of L-glutamate 5-phosphate into L-glutamate 5-semialdehyde and phosphate. The product spontaneously undergoes cyclization to form 1-pyrroline-5-carboxylate. This is Gamma-glutamyl phosphate reductase from Methylorubrum populi (strain ATCC BAA-705 / NCIMB 13946 / BJ001) (Methylobacterium populi).